A 216-amino-acid chain; its full sequence is Glutathione S-transferase D5 (216 aa).

The region spanning 1–80 (MDFYYSPRGS…YLVEKYGKDD (80 aa)) is the GST N-terminal domain. Glutathione contacts are provided by residues 50-52 (HTI) and 64-66 (ESR). The GST C-terminal domain maps to 86 to 207 (DPKKQALVNQ…KGAVELKGVF (122 aa)).

This sequence belongs to the GST superfamily. Delta family. Homodimer.

The catalysed reaction is RX + glutathione = an S-substituted glutathione + a halide anion + H(+). Functionally, conjugation of reduced glutathione to a wide number of exogenous and endogenous hydrophobic electrophiles. May be involved in detoxification. The chain is Glutathione S-transferase D5 from Drosophila melanogaster (Fruit fly).